The primary structure comprises 108 residues: MSTEASVSYAALILADAEQEITSEKLLAITKAAGANVDQVWADVFAKAVEGKNLKELLFSFAAAAPASGAAAGSASGAAAGGEAAAEEAAEEEAAEESDDDMGFGLFD.

Residues 72 to 84 (AGSASGAAAGGEA) are compositionally biased toward low complexity. A disordered region spans residues 72–108 (AGSASGAAAGGEAAAEEAAEEEAAEESDDDMGFGLFD). Positions 85–102 (AAEEAAEEEAAEESDDDM) are enriched in acidic residues.

It belongs to the eukaryotic ribosomal protein P1/P2 family. As to quaternary structure, P1 and P2 exist as dimers at the large ribosomal subunit. Phosphorylated.

In terms of biological role, plays an important role in the elongation step of protein synthesis. The protein is Large ribosomal subunit protein P1B (RPP1B) of Candida albicans (Yeast).